The chain runs to 382 residues: Queuine tRNA-ribosyltransferase (382 aa).

The active-site Proton acceptor is Asp-93. Substrate contacts are provided by residues 93–97, Asp-147, Gln-191, and Gly-218; that span reads DSGGF. Positions 249-255 are RNA binding; it reads GVGKPED. Asp-268 functions as the Nucleophile in the catalytic mechanism. The segment at 273–277 is RNA binding; important for wobble base 34 recognition; sequence TRNAR. Residues Cys-306, Cys-308, Cys-311, and His-337 each coordinate Zn(2+).

It belongs to the queuine tRNA-ribosyltransferase family. As to quaternary structure, homodimer. Within each dimer, one monomer is responsible for RNA recognition and catalysis, while the other monomer binds to the replacement base PreQ1. Zn(2+) serves as cofactor.

It carries out the reaction 7-aminomethyl-7-carbaguanine + guanosine(34) in tRNA = 7-aminomethyl-7-carbaguanosine(34) in tRNA + guanine. Its pathway is tRNA modification; tRNA-queuosine biosynthesis. Catalyzes the base-exchange of a guanine (G) residue with the queuine precursor 7-aminomethyl-7-deazaguanine (PreQ1) at position 34 (anticodon wobble position) in tRNAs with GU(N) anticodons (tRNA-Asp, -Asn, -His and -Tyr). Catalysis occurs through a double-displacement mechanism. The nucleophile active site attacks the C1' of nucleotide 34 to detach the guanine base from the RNA, forming a covalent enzyme-RNA intermediate. The proton acceptor active site deprotonates the incoming PreQ1, allowing a nucleophilic attack on the C1' of the ribose to form the product. After dissociation, two additional enzymatic reactions on the tRNA convert PreQ1 to queuine (Q), resulting in the hypermodified nucleoside queuosine (7-(((4,5-cis-dihydroxy-2-cyclopenten-1-yl)amino)methyl)-7-deazaguanosine). This is Queuine tRNA-ribosyltransferase from Actinobacillus pleuropneumoniae serotype 5b (strain L20).